The chain runs to 78 residues: Acyl carrier protein (78 aa).

The Carrier domain maps to 2-77 (QNIEKKIKKI…SIFDIIKKYV (76 aa)). O-(pantetheine 4'-phosphoryl)serine is present on Ser37.

This sequence belongs to the acyl carrier protein (ACP) family. 4'-phosphopantetheine is transferred from CoA to a specific serine of apo-ACP by AcpS. This modification is essential for activity because fatty acids are bound in thioester linkage to the sulfhydryl of the prosthetic group.

The protein localises to the cytoplasm. It functions in the pathway lipid metabolism; fatty acid biosynthesis. Carrier of the growing fatty acid chain in fatty acid biosynthesis. This is Acyl carrier protein from Buchnera aphidicola subsp. Baizongia pistaciae (strain Bp).